A 296-amino-acid polypeptide reads, in one-letter code: Formamidopyrimidine-DNA glycosylase (296 aa).

The Schiff-base intermediate with DNA role is filled by Pro2. Glu3 (proton donor) is an active-site residue. The active-site Proton donor; for beta-elimination activity is the Lys58. Residues His104, Arg126, and Lys169 each contribute to the DNA site. The FPG-type zinc-finger motif lies at 260–296 (SVYDREGQACGTPGCGGTVARIVQAGRSTFYCAACQK). Arg286 acts as the Proton donor; for delta-elimination activity in catalysis.

It belongs to the FPG family. Monomer. Zn(2+) serves as cofactor.

The enzyme catalyses Hydrolysis of DNA containing ring-opened 7-methylguanine residues, releasing 2,6-diamino-4-hydroxy-5-(N-methyl)formamidopyrimidine.. It catalyses the reaction 2'-deoxyribonucleotide-(2'-deoxyribose 5'-phosphate)-2'-deoxyribonucleotide-DNA = a 3'-end 2'-deoxyribonucleotide-(2,3-dehydro-2,3-deoxyribose 5'-phosphate)-DNA + a 5'-end 5'-phospho-2'-deoxyribonucleoside-DNA + H(+). Involved in base excision repair of DNA damaged by oxidation or by mutagenic agents. Acts as a DNA glycosylase that recognizes and removes damaged bases. Has a preference for oxidized purines, such as 7,8-dihydro-8-oxoguanine (8-oxoG). Has AP (apurinic/apyrimidinic) lyase activity and introduces nicks in the DNA strand. Cleaves the DNA backbone by beta-delta elimination to generate a single-strand break at the site of the removed base with both 3'- and 5'-phosphates. In Rhizobium etli (strain CIAT 652), this protein is Formamidopyrimidine-DNA glycosylase.